We begin with the raw amino-acid sequence, 274 residues long: Proteasome subunit beta (274 aa).

The propeptide at 1 to 52 (MADPLGAAGRLPAVFMTPGTSSFADFLSRSAPHLLPGARSGLPGPVTEVAHG) is removed in mature form; by autocatalysis. Catalysis depends on Thr53, which acts as the Nucleophile.

The protein belongs to the peptidase T1B family. The 20S proteasome core is composed of 14 alpha and 14 beta subunits that assemble into four stacked heptameric rings, resulting in a barrel-shaped structure. The two inner rings, each composed of seven catalytic beta subunits, are sandwiched by two outer rings, each composed of seven alpha subunits. The catalytic chamber with the active sites is on the inside of the barrel. Has a gated structure, the ends of the cylinder being occluded by the N-termini of the alpha-subunits. Is capped by the proteasome-associated ATPase, ARC.

Its subcellular location is the cytoplasm. The catalysed reaction is Cleavage of peptide bonds with very broad specificity.. It functions in the pathway protein degradation; proteasomal Pup-dependent pathway. The formation of the proteasomal ATPase ARC-20S proteasome complex, likely via the docking of the C-termini of ARC into the intersubunit pockets in the alpha-rings, may trigger opening of the gate for substrate entry. Interconversion between the open-gate and close-gate conformations leads to a dynamic regulation of the 20S proteasome proteolysis activity. In terms of biological role, component of the proteasome core, a large protease complex with broad specificity involved in protein degradation. The sequence is that of Proteasome subunit beta from Frankia casuarinae (strain DSM 45818 / CECT 9043 / HFP020203 / CcI3).